The sequence spans 1177 residues: uncharacterized protein (1177 aa).

The N-terminal stretch at 1-26 is a signal peptide; the sequence is MKKLLKKSKFWWFLLCGLSVSTILVA. The N-palmitoyl cysteine moiety is linked to residue cysteine 27. Residue cysteine 27 is the site of S-diacylglycerol cysteine attachment.

Belongs to the MG307/MG309/MG338 family.

Its subcellular location is the cell membrane. This is an uncharacterized protein from Mycoplasma genitalium (strain ATCC 33530 / DSM 19775 / NCTC 10195 / G37) (Mycoplasmoides genitalium).